A 153-amino-acid polypeptide reads, in one-letter code: 3-hydroxyacyl-[acyl-carrier-protein] dehydratase FabZ (153 aa).

His54 is an active-site residue.

Belongs to the thioester dehydratase family. FabZ subfamily.

The protein localises to the cytoplasm. The catalysed reaction is a (3R)-hydroxyacyl-[ACP] = a (2E)-enoyl-[ACP] + H2O. Involved in unsaturated fatty acids biosynthesis. Catalyzes the dehydration of short chain beta-hydroxyacyl-ACPs and long chain saturated and unsaturated beta-hydroxyacyl-ACPs. This Shewanella pealeana (strain ATCC 700345 / ANG-SQ1) protein is 3-hydroxyacyl-[acyl-carrier-protein] dehydratase FabZ.